The sequence spans 176 residues: Non-specific lipid transfer protein GPI-anchored 12 (176 aa).

Positions 1–20 (MLTTNTLAVLLLLFLSLCSG) are cleaved as a signal peptide. Cystine bridges form between cysteine 40/cysteine 83, cysteine 50/cysteine 67, cysteine 68/cysteine 110, and cysteine 81/cysteine 120. Asparagine 46 carries an N-linked (GlcNAc...) asparagine glycan. Residue asparagine 149 is the site of GPI-anchor amidated asparagine attachment. Residues 150-176 (GAMTTKYCGVALNSLALLLLFTFLSLS) constitute a propeptide, removed in mature form.

Belongs to the plant LTP family. As to expression, preferentially expressed in the endodermis of hypocotyls and roots of seedlings, and in petals and anthers of inflorescences. May also be expressed in siliques, carpels and pedicels.

It localises to the cell membrane. Probable lipid transfer protein. This chain is Non-specific lipid transfer protein GPI-anchored 12, found in Arabidopsis thaliana (Mouse-ear cress).